A 494-amino-acid polypeptide reads, in one-letter code: GDP-fucose protein O-fucosyltransferase 4 (494 aa).

Over 1 to 7 (MAARYTE) the chain is Cytoplasmic. A helical; Signal-anchor for type II membrane protein transmembrane segment spans residues 8–24 (AVLAALGVLSVCSASSS). Residues 25-494 (SGSGASGKAG…EIFMKRNKNL (470 aa)) are Lumenal-facing. N167 carries N-linked (GlcNAc...) asparagine glycosylation. C390 and C393 are joined by a disulfide.

The protein belongs to the glycosyltransferase 10 family.

The protein localises to the endoplasmic reticulum membrane. It catalyses the reaction L-threonyl-[protein] + GDP-beta-L-fucose = 3-O-(alpha-L-fucosyl)-L-threonyl-[protein] + GDP + H(+). The enzyme catalyses L-seryl-[protein] + GDP-beta-L-fucose = 3-O-(alpha-L-fucosyl)-L-seryl-[protein] + GDP + H(+). The protein operates within protein modification; protein glycosylation. Its function is as follows. Protein O-fucosyltransferase that specifically catalyzes O-fucosylation of serine or threonine residues in EMI domains of target proteins, such as MMRN1, MMRN2 and EMID1. Attaches fucose through an O-glycosidic linkage. O-fucosylation of EMI domain-containing proteins may be required for facilitating protein folding and secretion. Also shows minor alpha-(1,3)-fucosyltransferase activity toward activity toward biantennary N-glycan acceptors. However, this was tested with a library of synthetic substrates and this activity is unsure in vivo. The protein is GDP-fucose protein O-fucosyltransferase 4 (Fut11) of Rattus norvegicus (Rat).